The sequence spans 346 residues: N-acetyl-gamma-glutamyl-phosphate reductase (346 aa).

Cys-150 is an active-site residue.

Belongs to the NAGSA dehydrogenase family. Type 1 subfamily.

Its subcellular location is the cytoplasm. It carries out the reaction N-acetyl-L-glutamate 5-semialdehyde + phosphate + NADP(+) = N-acetyl-L-glutamyl 5-phosphate + NADPH + H(+). It functions in the pathway amino-acid biosynthesis; L-arginine biosynthesis; N(2)-acetyl-L-ornithine from L-glutamate: step 3/4. Catalyzes the NADPH-dependent reduction of N-acetyl-5-glutamyl phosphate to yield N-acetyl-L-glutamate 5-semialdehyde. The chain is N-acetyl-gamma-glutamyl-phosphate reductase from Lachnoclostridium phytofermentans (strain ATCC 700394 / DSM 18823 / ISDg) (Clostridium phytofermentans).